The sequence spans 132 residues: Small ribosomal subunit protein uS11 (132 aa).

Residues 1–21 (MAAPKSAVRKPRRKDKKNIAV) are disordered. The span at 7–16 (AVRKPRRKDK) shows a compositional bias: basic residues.

This sequence belongs to the universal ribosomal protein uS11 family. Part of the 30S ribosomal subunit. Interacts with proteins S7 and S18. Binds to IF-3.

Located on the platform of the 30S subunit, it bridges several disparate RNA helices of the 16S rRNA. Forms part of the Shine-Dalgarno cleft in the 70S ribosome. This is Small ribosomal subunit protein uS11 from Clavibacter sepedonicus (Clavibacter michiganensis subsp. sepedonicus).